A 192-amino-acid polypeptide reads, in one-letter code: Transcription termination/antitermination protein NusG (192 aa).

It belongs to the NusG family.

Participates in transcription elongation, termination and antitermination. The sequence is that of Transcription termination/antitermination protein NusG from Rickettsia prowazekii (strain Madrid E).